Reading from the N-terminus, the 146-residue chain is UPF0735 ACT domain-containing protein TTE2621 (146 aa).

The ACT domain occupies threonine 71 to glutamate 146.

Belongs to the UPF0735 family.

This chain is UPF0735 ACT domain-containing protein TTE2621, found in Caldanaerobacter subterraneus subsp. tengcongensis (strain DSM 15242 / JCM 11007 / NBRC 100824 / MB4) (Thermoanaerobacter tengcongensis).